Reading from the N-terminus, the 224-residue chain is DeSI-like protein At4g17486 (224 aa).

Positions 26–163 (TPVYLNVYDL…FCNCLLPESI (138 aa)) constitute a PPPDE domain. Active-site residues include His51 and Cys125. Positions 176–201 (EFSDEDESNSEASSVSDEEGSEQHLI) are disordered.

The protein belongs to the DeSI family.

The chain is DeSI-like protein At4g17486 from Arabidopsis thaliana (Mouse-ear cress).